The primary structure comprises 245 residues: 1-(5-phosphoribosyl)-5-[(5-phosphoribosylamino)methylideneamino] imidazole-4-carboxamide isomerase (245 aa).

Asp-10 (proton acceptor) is an active-site residue. Asp-135 acts as the Proton donor in catalysis.

The protein belongs to the HisA/HisF family.

Its subcellular location is the cytoplasm. The catalysed reaction is 1-(5-phospho-beta-D-ribosyl)-5-[(5-phospho-beta-D-ribosylamino)methylideneamino]imidazole-4-carboxamide = 5-[(5-phospho-1-deoxy-D-ribulos-1-ylimino)methylamino]-1-(5-phospho-beta-D-ribosyl)imidazole-4-carboxamide. It participates in amino-acid biosynthesis; L-histidine biosynthesis; L-histidine from 5-phospho-alpha-D-ribose 1-diphosphate: step 4/9. This is 1-(5-phosphoribosyl)-5-[(5-phosphoribosylamino)methylideneamino] imidazole-4-carboxamide isomerase from Methanosarcina acetivorans (strain ATCC 35395 / DSM 2834 / JCM 12185 / C2A).